The primary structure comprises 488 residues: Glutamyl-tRNA(Gln) amidotransferase subunit A (488 aa).

Active-site charge relay system residues include Lys-77 and Ser-152. Ser-176 (acyl-ester intermediate) is an active-site residue.

Belongs to the amidase family. GatA subfamily. Heterotrimer of A, B and C subunits.

The enzyme catalyses L-glutamyl-tRNA(Gln) + L-glutamine + ATP + H2O = L-glutaminyl-tRNA(Gln) + L-glutamate + ADP + phosphate + H(+). Allows the formation of correctly charged Gln-tRNA(Gln) through the transamidation of misacylated Glu-tRNA(Gln) in organisms which lack glutaminyl-tRNA synthetase. The reaction takes place in the presence of glutamine and ATP through an activated gamma-phospho-Glu-tRNA(Gln). This is Glutamyl-tRNA(Gln) amidotransferase subunit A from Streptococcus pyogenes serotype M6 (strain ATCC BAA-946 / MGAS10394).